A 318-amino-acid polypeptide reads, in one-letter code: NADH-ubiquinone oxidoreductase chain 1 (318 aa).

The next 8 helical transmembrane spans lie at 2-22 (FLMN…FLTL), 68-88 (ISLF…MWIP), 102-122 (ILFI…SGWA), 146-166 (LAII…SSLI), 171-191 (FTWL…STLA), 217-237 (AGPF…MNAL), 253-273 (EMFT…FLWI), and 294-314 (LPLT…MACI).

This sequence belongs to the complex I subunit 1 family.

Its subcellular location is the mitochondrion inner membrane. The catalysed reaction is a ubiquinone + NADH + 5 H(+)(in) = a ubiquinol + NAD(+) + 4 H(+)(out). In terms of biological role, core subunit of the mitochondrial membrane respiratory chain NADH dehydrogenase (Complex I) that is believed to belong to the minimal assembly required for catalysis. Complex I functions in the transfer of electrons from NADH to the respiratory chain. The immediate electron acceptor for the enzyme is believed to be ubiquinone. The chain is NADH-ubiquinone oxidoreductase chain 1 (MT-ND1) from Tamias sibiricus (Siberian chipmunk).